Here is a 26-residue protein sequence, read N- to C-terminus: Dermaseptin-J4 (26 aa).

Position 26 is a valine amide (Val26).

Expressed by the skin glands.

The protein resides in the secreted. Functionally, has antimicrobial activity. The chain is Dermaseptin-J4 from Phasmahyla jandaia (Jandaia leaf frog).